A 264-amino-acid chain; its full sequence is Neuferricin (264 aa).

A signal peptide spans 1–22 (MLRCGGRGLLLGLAVAAAAVMA). In terms of domain architecture, Cytochrome b5 heme-binding spans 35 to 134 (FRLFIPEELS…KNYVCVGRVT (100 aa)).

It belongs to the cytochrome b5 family. MAPR subfamily.

The protein resides in the secreted. Its function is as follows. Heme-binding protein which promotes neuronal but not astrocyte differentiation. In Homo sapiens (Human), this protein is Neuferricin.